The sequence spans 490 residues: Serine palmitoyltransferase 2 (490 aa).

A helical membrane pass occupies residues 10 to 30 (VDDVGYLPILFLYIAYAFIIF). N6-(pyridoxal phosphate)lysine is present on K321.

It belongs to the class-II pyridoxal-phosphate-dependent aminotransferase family. As to quaternary structure, forms a heterodimer with sptA. Requires pyridoxal 5'-phosphate as cofactor.

The protein localises to the endoplasmic reticulum membrane. It catalyses the reaction L-serine + hexadecanoyl-CoA + H(+) = 3-oxosphinganine + CO2 + CoA. Its pathway is lipid metabolism; sphingolipid metabolism. Catalytic subunit of serine palmitoyltransferase (SPT), which catalyzes the committed step in the synthesis of sphingolipids, the condensation of serine with palmitoyl CoA to form the long chain base 3-ketosphinganine. The sequence is that of Serine palmitoyltransferase 2 (sptB) from Dictyostelium discoideum (Social amoeba).